The sequence spans 213 residues: Dimethylamine corrinoid protein 3 (213 aa).

One can recognise a B12-binding N-terminal domain in the interval 1–91 (MADIEGLLHE…DLPAGAEKKL (91 aa)). In terms of domain architecture, B12-binding spans 92-213 (GVIVNGTVEG…AVAKAKELLL (122 aa)). Histidine 104 is a methylcob(III)alamin binding site.

The protein belongs to the methylamine corrinoid protein family.

The protein operates within one-carbon metabolism; methanogenesis from dimethylamine. Functionally, acts as a methyl group carrier between MtbB and MtbA. This Methanosarcina acetivorans (strain ATCC 35395 / DSM 2834 / JCM 12185 / C2A) protein is Dimethylamine corrinoid protein 3 (mtbC3).